The following is a 120-amino-acid chain: Putative defensin-like protein 179 (120 aa).

Positions Met1–Ala27 are cleaved as a signal peptide. Disulfide bonds link Cys37/Cys56, Cys40/Cys63, Cys44/Cys65, Cys74/Cys120, Cys85/Cys105, Cys90/Cys114, and Cys94/Cys116.

The protein belongs to the DEFL family.

It is found in the secreted. In Arabidopsis thaliana (Mouse-ear cress), this protein is Putative defensin-like protein 179 (LCR57).